Reading from the N-terminus, the 252-residue chain is Triosephosphate isomerase (252 aa).

10–12 (NWK) contributes to the substrate binding site. The Electrophile role is filled by His-96. Glu-168 functions as the Proton acceptor in the catalytic mechanism. Residues Gly-174, Ser-214, and 235–236 (GG) contribute to the substrate site.

Belongs to the triosephosphate isomerase family. Homodimer.

Its subcellular location is the cytoplasm. It catalyses the reaction D-glyceraldehyde 3-phosphate = dihydroxyacetone phosphate. Its pathway is carbohydrate biosynthesis; gluconeogenesis. It functions in the pathway carbohydrate degradation; glycolysis; D-glyceraldehyde 3-phosphate from glycerone phosphate: step 1/1. In terms of biological role, involved in the gluconeogenesis. Catalyzes stereospecifically the conversion of dihydroxyacetone phosphate (DHAP) to D-glyceraldehyde-3-phosphate (G3P). The chain is Triosephosphate isomerase from Streptococcus pyogenes serotype M18 (strain MGAS8232).